Consider the following 286-residue polypeptide: Beta-glucanase (286 aa).

The N-terminal stretch at 1-30 (MCTMPLMKLKKMMRRTAFLLSVLIGCSMLG) is a signal peptide. Residues 48 to 286 (FDYSGLPDPE…DYVRVYRWVE (239 aa)) form the GH16 domain. E158 serves as the catalytic Nucleophile. The active-site Proton donor is the E163.

Belongs to the glycosyl hydrolase 16 family.

It carries out the reaction Hydrolysis of (1-&gt;4)-beta-D-glucosidic linkages in beta-D-glucans containing (1-&gt;3)- and (1-&gt;4)-bonds.. In terms of biological role, shows activity on lichenan, beta-glucan and laminarin but not on CMC cellulose or xylan. In Rhodothermus marinus (Rhodothermus obamensis), this protein is Beta-glucanase (bglA).